Reading from the N-terminus, the 76-residue chain is Acyl carrier protein (76 aa).

In terms of domain architecture, Carrier spans 1–76 (MSIEERVKKI…SAIDYVQNNQ (76 aa)). At serine 36 the chain carries O-(pantetheine 4'-phosphoryl)serine.

It belongs to the acyl carrier protein (ACP) family. Post-translationally, 4'-phosphopantetheine is transferred from CoA to a specific serine of apo-ACP by AcpS. This modification is essential for activity because fatty acids are bound in thioester linkage to the sulfhydryl of the prosthetic group.

The protein localises to the cytoplasm. It functions in the pathway lipid metabolism; fatty acid biosynthesis. In terms of biological role, carrier of the growing fatty acid chain in fatty acid biosynthesis. The protein is Acyl carrier protein of Mannheimia succiniciproducens (strain KCTC 0769BP / MBEL55E).